A 227-amino-acid chain; its full sequence is uncharacterized protein (227 aa).

Helical transmembrane passes span phenylalanine 15–tyrosine 34, threonine 55–valine 77, alanine 92–leucine 114, phenylalanine 121–leucine 140, leucine 145–serine 167, proline 180–leucine 202, and phenylalanine 206–leucine 224.

It is found in the cell membrane. This is an uncharacterized protein from Archaeoglobus fulgidus (strain ATCC 49558 / DSM 4304 / JCM 9628 / NBRC 100126 / VC-16).